A 239-amino-acid polypeptide reads, in one-letter code: Putative HTH-type transcriptional regulator YkgA (239 aa).

An HTH araC/xylS-type domain is found at 19–117 (QQLLEWIECN…GCSPREYRHR (99 aa)). 2 DNA-binding regions (H-T-H motif) span residues 36–57 (EDIAQKSGYSRRNIQLLFRNFM) and 84–107 (MLDIALSLHFDSQQSFSREFKKLF).

In Escherichia coli (strain K12), this protein is Putative HTH-type transcriptional regulator YkgA (ykgA).